Reading from the N-terminus, the 115-residue chain is MSGEPTDEDLEELRKKKMEQLKEQGGEGQSEAAEAQRQQAEAQKKAILRKTLTDGARKRLNTVQMSKPQFGEKVEQQIVALAQSGRIQGKIDEEKMKELLQEMKPDSQSFDIKRR.

Over residues 1 to 11 (MSGEPTDEDLE) the composition is skewed to acidic residues. The disordered stretch occupies residues 1–46 (MSGEPTDEDLEELRKKKMEQLKEQGGEGQSEAAEAQRQQAEAQKKA). Over residues 12–25 (ELRKKKMEQLKEQG) the composition is skewed to basic and acidic residues. Over residues 29-41 (QSEAAEAQRQQAE) the composition is skewed to low complexity.

Belongs to the PDCD5 family.

This chain is DNA-binding protein NP_4416A, found in Natronomonas pharaonis (strain ATCC 35678 / DSM 2160 / CIP 103997 / JCM 8858 / NBRC 14720 / NCIMB 2260 / Gabara) (Halobacterium pharaonis).